The following is a 234-amino-acid chain: Redox-sensing transcriptional repressor Rex (234 aa).

The H-T-H motif DNA-binding region spans 17–56; it reads TYIRVLEELEAQNVLRASSGELARRAGVTPFQVRKDLTYF. An NAD(+)-binding site is contributed by 91–96; sequence GMGRLG.

Belongs to the transcriptional regulatory Rex family. As to quaternary structure, homodimer.

The protein localises to the cytoplasm. Its function is as follows. Modulates transcription in response to changes in cellular NADH/NAD(+) redox state. The polypeptide is Redox-sensing transcriptional repressor Rex (Deinococcus radiodurans (strain ATCC 13939 / DSM 20539 / JCM 16871 / CCUG 27074 / LMG 4051 / NBRC 15346 / NCIMB 9279 / VKM B-1422 / R1)).